Here is a 445-residue protein sequence, read N- to C-terminus: tRNA(Ile)-lysidine synthase (445 aa).

38-43 (SGGLDS) serves as a coordination point for ATP.

This sequence belongs to the tRNA(Ile)-lysidine synthase family.

The protein resides in the cytoplasm. The catalysed reaction is cytidine(34) in tRNA(Ile2) + L-lysine + ATP = lysidine(34) in tRNA(Ile2) + AMP + diphosphate + H(+). Its function is as follows. Ligates lysine onto the cytidine present at position 34 of the AUA codon-specific tRNA(Ile) that contains the anticodon CAU, in an ATP-dependent manner. Cytidine is converted to lysidine, thus changing the amino acid specificity of the tRNA from methionine to isoleucine. This chain is tRNA(Ile)-lysidine synthase, found in Neisseria gonorrhoeae (strain ATCC 700825 / FA 1090).